Reading from the N-terminus, the 79-residue chain is MSDIAERVKKIVVEHLGVEPEKVVESANFIDDLGADSLDTVELVMAFEEEFNVEIPDDAAETIQTVGDAVKFLEKNSAA.

Residues 2–77 form the Carrier domain; sequence SDIAERVKKI…DAVKFLEKNS (76 aa). Residue serine 37 is modified to O-(pantetheine 4'-phosphoryl)serine.

Belongs to the acyl carrier protein (ACP) family. 4'-phosphopantetheine is transferred from CoA to a specific serine of apo-ACP by AcpS. This modification is essential for activity because fatty acids are bound in thioester linkage to the sulfhydryl of the prosthetic group.

It localises to the cytoplasm. It functions in the pathway lipid metabolism; fatty acid biosynthesis. Its function is as follows. Carrier of the growing fatty acid chain in fatty acid biosynthesis. This chain is Acyl carrier protein, found in Methylobacterium radiotolerans (strain ATCC 27329 / DSM 1819 / JCM 2831 / NBRC 15690 / NCIMB 10815 / 0-1).